The following is a 1161-amino-acid chain: MLRRVAVAAVCVTGRKLRCEAGRELTALGRIEARGLCEESSKPFPTLTMPGRNKAKSTCSCPDLQPNGQDLGESGRLARLGADESEEEGRSFSNVGDPEIIKSPSDPKQYRYIKLQNGLQALLISDLSNVEGKTGNATDEEEEEEEEEEEEDDDDDDDDDDDDEDSGAEIQDDDEEGFDDEEEFDDDDDDEHDDDDLENEENELEELEERVEARKKTTEKQSAAALCVGVGSFADPDDLPGLAHFLEHMVFMGSLKYPDENGFDAFLKKHGGSDNASTDCERTVFQFDVQRKYFKEALDRWAQFFIHPLMIRDAIDREVEAVDSEYQLARPSDANRKEMLFGSLARPGHPMGKFFWGNAETLKHEPKKNNIDTHARLREFWMRYYSAHYMTLVVQSKETLDTLEKWVTEIFSQIPNNGLPKPNFSHLTDPFDTPAFNKLYRVVPIRKIHALTITWALPPQQQHYRVKPLHYISWLVGHEGKGSILSYLRKKCWALALFGGNGETGFEQNSTYSVFSISITLTDEGYEHFYEVAHTVFQYLKMLQKLGPEKRVFEEIQKIEDNEFHYQEQTDPVEYVENMCENMQLYPRQDFLTGDQLLFEYKPEVIAEALNQLVPQKANLVLLSGANEGRCDLKEKWFGTQYSIEDIENSWTELWKSNFDLNPDLHLPAENKYIATDFTLKAFDCPETEYPAKIVNTAQGCLWYKKDNKFKIPKAYIRFHLISPLIQKSAANVVLFDIFVNILTHNLAEPAYEADVAQLEYKLVAGEHGLIIRVKGFNHKLPLLFQLIIDYLTEFSSTPAVFTMITEQLKKTYFNILIKPETLAKDVRLLILEYSRWSMIDKYQALMDGLSLDSLLNFVKDFKSQLFVEGLVQGNVTSTESMDFLKYVVDKLNFAPLEREMPVQFQVVELPSGHHLCKVRALNKGDANSEVTVYYQSGTRSLREYTLMELLVMHMEEPCFDFLRTKQTLGYHVYPTCRNTSGILGFSVTVGTQATKYNSETVDKKIEEFLSSFEEKIENLTEDAFNTQVTALIKLKECEDTHLGEEVDRNWNEVVTQQYLFDRLAHEIEALKSFSKSDLVSWFKAHRGPGSKMLSVHVVGYGKYELEEDGAPFGEDSNSREGMQLTYLPPSPVLAESTTPITDIRAFTATLSLFPYHKIVK.

The N-terminal stretch at 1 to 18 is a signal peptide; that stretch reads MLRRVAVAAVCVTGRKLR. Disordered regions lie at residues 49–103 and 130–218; these read MPGR…IIKS and VEGK…KKTT. 3 positions are modified to phosphoserine: Ser-85, Ser-91, and Ser-93. The span at 138–209 shows a compositional bias: acidic residues; the sequence is TDEEEEEEEE…EENELEELEE (72 aa). His-244 is a Zn(2+) binding site. The Proton acceptor role is filled by Glu-247. 2 residues coordinate Zn(2+): His-248 and Glu-325.

This sequence belongs to the peptidase M16 family. In terms of assembly, interacts with BACE1 and NRG1. The cofactor is Zn(2+). As to expression, highly expressed in brain of early postnatal mice but expressed at a lower level in the brains of adult mice. Expression is high in cortical neurons, and lower in neurons in the striatum. Very low expression detected in the corpus callosum. Also expressed in the gray matter in spinal cord and dorsal root ganglia.

Its subcellular location is the mitochondrion. It is found in the cell projection. The protein resides in the dendrite. The enzyme catalyses Hydrolysis of polypeptides, preferably at -Xaa-|-Arg-Lys-, and less commonly at -Arg-|-Arg-Xaa-, in which Xaa is not Arg or Lys.. Its function is as follows. Cleaves peptide substrates on the N-terminus of arginine residues in dibasic pairs. Is a critical activator of BACE1- and ADAM17-mediated pro-neuregulin ectodomain shedding, involved in the positive regulation of axonal maturation and myelination. Required for proper functioning of 2-oxoglutarate dehydrogenase (OGDH). This chain is Nardilysin, found in Mus musculus (Mouse).